Reading from the N-terminus, the 697-residue chain is Phosphate acetyltransferase (697 aa).

Residues 366-697 form a phosphate acetyltransferase region; that stretch reads MFEHKLLEQA…QSPTEKASAQ (332 aa).

It in the N-terminal section; belongs to the CobB/CobQ family. In the C-terminal section; belongs to the phosphate acetyltransferase and butyryltransferase family. In terms of assembly, homohexamer.

The protein resides in the cytoplasm. It carries out the reaction acetyl-CoA + phosphate = acetyl phosphate + CoA. It functions in the pathway metabolic intermediate biosynthesis; acetyl-CoA biosynthesis; acetyl-CoA from acetate: step 2/2. Involved in acetate metabolism. This chain is Phosphate acetyltransferase (pta), found in Streptomyces coelicolor (strain ATCC BAA-471 / A3(2) / M145).